Here is a 416-residue protein sequence, read N- to C-terminus: Ena/VASP-like protein (416 aa).

Residues 1–112 form the WH1 domain; it reads MSEQSICQAR…NAMLFALNIM (112 aa). The span at 114 to 129 shows a compositional bias: polar residues; the sequence is SQEGGPSSQRQVQNGP. Disordered stretches follow at residues 114 to 133 and 141 to 369; these read SQEG…SPDE and VMEQ…PAGS. Phosphoserine is present on S130. Residues 141-157 show a composition bias toward basic and acidic residues; the sequence is VMEQHQQQRQESLERRT. Low complexity predominate over residues 169–180; sequence PSSAASAPVSCS. Pro residues predominate over residues 181–206; the sequence is GPPPPPPPPVPPPPTGATPPPPPPLP. Residues 222-242 form an EVH2 block A region; that stretch reads GLAAAIAGAKLRRVQRPEDAS. The EVH2 stretch occupies residues 222-413; it reads GLAAAIAGAK…DAIRQELSGI (192 aa). The KLKR motif lies at 231 to 234; that stretch reads KLRR. Residues 242–253 show a composition bias toward low complexity; that stretch reads SGGSSPSGTSKS. S246 and S259 each carry phosphoserine. The interval 265–282 is EVH2 block B; sequence GGLMEEMNKLLAKRRKAA. The span at 299–320 shows a compositional bias: polar residues; the sequence is EDPSTSPSPGTRAASQPPNSSE. S304, S306, S329, S331, S341, S349, S354, and S369 each carry phosphoserine. The span at 321 to 331 shows a compositional bias: basic and acidic residues; sequence AGRKPWERSNS. A required for interaction with ZDHHC17 region spans residues 342–362; sequence RTPSVAKSPEAKSPLQSQPHS. The EVH2 block C stretch occupies residues 379–413; that stretch reads DLDRMKQEILEEVVRELHKVKEEIIDAIRQELSGI.

This sequence belongs to the Ena/VASP family. As to quaternary structure, homotetramer. Binds to the SH3 domains of ABL1, LYN and SRC. Also binds to profilin, with preference for isoform IIa of PFN2, and the WW domain of APBB1/FE65. Binds to SEMA6A. Interacts, via the Pro-rich region, with the C-terminal SH3 domain of DNMBP. Interacts with RAPH1. Binds, via the EVH1 domain, the Pro-rich domain of Listeria monocytogenes actA. Binds, via the EVH1 domain, the Pro-rich domain of ZYX. Interacts with FYB1. Interacts with ZDHHC17. Post-translationally, phosphorylated by PKA; phosphorylation abolishes binding to SH3 domains of ABL and SRC.

The protein resides in the cytoplasm. The protein localises to the cytoskeleton. Its subcellular location is the stress fiber. It is found in the cell projection. It localises to the lamellipodium. Its function is as follows. Ena/VASP proteins are actin-associated proteins involved in a range of processes dependent on cytoskeleton remodeling and cell polarity such as axon guidance and lamellipodial and filopodial dynamics in migrating cells. EVL enhances actin nucleation and polymerization. In Homo sapiens (Human), this protein is Ena/VASP-like protein (EVL).